The following is a 208-amino-acid chain: Uracil phosphoribosyltransferase (208 aa).

Residues Arg78, Arg103, and 130–138 (DPMLATGGS) contribute to the 5-phospho-alpha-D-ribose 1-diphosphate site. Uracil is bound by residues Ile193 and 198-200 (GDA). Asp199 is a 5-phospho-alpha-D-ribose 1-diphosphate binding site.

The protein belongs to the UPRTase family. Requires Mg(2+) as cofactor.

It carries out the reaction UMP + diphosphate = 5-phospho-alpha-D-ribose 1-diphosphate + uracil. Its pathway is pyrimidine metabolism; UMP biosynthesis via salvage pathway; UMP from uracil: step 1/1. With respect to regulation, allosterically activated by GTP. In terms of biological role, catalyzes the conversion of uracil and 5-phospho-alpha-D-ribose 1-diphosphate (PRPP) to UMP and diphosphate. In Shewanella sediminis (strain HAW-EB3), this protein is Uracil phosphoribosyltransferase.